Reading from the N-terminus, the 1166-residue chain is UDP-N-acetylglucosamine transferase subunit ALG13 (1166 aa).

The tract at residues 1 to 125 is glycosyltransferase activity; sequence MKRAFVTVGT…LHKEGHLFYC (125 aa). Residues 126 to 394 form a deubiquitinase activity region; sequence TCRVLSCPAP…GSRRNKHHAL (269 aa). Residues 225–346 enclose the OTU domain; sequence LFRKVVAKDA…NGHYDSVYSK (122 aa). Asp233 acts as the For deubiquitinase activity in catalysis. Cys236 acts as the Nucleophile; for deubiquitinase activity in catalysis. Residue His339 is the For deubiquitinase activity of the active site. The segment at 393–438 is disordered; it reads ALTASVEGSSDQKSSTEDRTEEAAACSSAASTPEGNKQGTERQKVP. In terms of domain architecture, Tudor spans 486 to 546; that stretch reads YYFLGDKCQV…RPVNQVALLP (61 aa). 3 stretches are compositionally biased toward pro residues: residues 921 to 930, 941 to 957, and 1004 to 1034; these read PPPLPPPPPA, PLPPPPPPPPPPPPPYS, and QPQPQPQPQPQPQPQPQPQPQQPQQQQPPPQ. Disordered regions lie at residues 921-966 and 998-1056; these read PPPL…SDLP and QQQL…EQPL.

It belongs to the glycosyltransferase 28 family. As to quaternary structure, forms with ALG14 the active heterodimeric UDP-N-acetylglucosamine transferase complex. Not able to interact with ALG14 to form an active UDP-N-acetylglucosamine transferase complex.

The protein localises to the endoplasmic reticulum membrane. The catalysed reaction is an N-acetyl-alpha-D-glucosaminyl-diphospho-di-trans,poly-cis-dolichol + UDP-N-acetyl-alpha-D-glucosamine = an N,N'-diacetylchitobiosyl-diphospho-di-trans,poly-cis-dolichol + UDP + H(+). It participates in protein modification; protein glycosylation. Its function is as follows. Catalytic subunit of the UDP-N-acetylglucosamine transferase complex that operates in the biosynthetic pathway of dolichol-linked oligosaccharides, the glycan precursors employed in protein asparagine (N)-glycosylation. The assembly of dolichol-linked oligosaccharides begins on the cytosolic side of the endoplasmic reticulum membrane and finishes in its lumen. The sequential addition of sugars to dolichol pyrophosphate produces dolichol-linked oligosaccharides containing fourteen sugars, including two GlcNAcs, nine mannoses and three glucoses. Once assembled, the oligosaccharide is transferred from the lipid to nascent proteins by oligosaccharyltransferases. On the cytoplasmic face of the endoplasmic reticulum, the dimeric ALG13/ALG14 complex catalyzes the second step of dolichol pyrophosphate biosynthesis, transferring a beta1,4-linked N-acetylglucosamine (GlcNAc) from UDP-GlcNAc to GlcNAc-pyrophosphatedolichol (Gn-PDol) to produce N,N'-diacetylchitobiosyl diphosphodolichol. N,N'-diacetylchitobiosyl diphosphodolichol is a substrate for ALG1, the following enzyme in the biosynthetic pathway. Functionally, no glycosyltransferase or deubiquitinase activity is detected for this potential multifunctional enzyme. In Mus musculus (Mouse), this protein is UDP-N-acetylglucosamine transferase subunit ALG13.